A 330-amino-acid chain; its full sequence is Methylthioribose-1-phosphate isomerase (330 aa).

Substrate is bound by residues 49 to 51, Arg-83, and Gln-179; that span reads RGA. Residue Asp-220 is the Proton donor of the active site. 230–231 contacts substrate; the sequence is NK.

It belongs to the eIF-2B alpha/beta/delta subunits family. MtnA subfamily.

The catalysed reaction is 5-(methylsulfanyl)-alpha-D-ribose 1-phosphate = 5-(methylsulfanyl)-D-ribulose 1-phosphate. It functions in the pathway amino-acid biosynthesis; L-methionine biosynthesis via salvage pathway; L-methionine from S-methyl-5-thio-alpha-D-ribose 1-phosphate: step 1/6. Catalyzes the interconversion of methylthioribose-1-phosphate (MTR-1-P) into methylthioribulose-1-phosphate (MTRu-1-P). In Thermus thermophilus (strain ATCC 27634 / DSM 579 / HB8), this protein is Methylthioribose-1-phosphate isomerase.